Consider the following 332-residue polypeptide: Cytochrome c1, heme protein, mitochondrial (332 aa).

Residues 1 to 70 (MLARTCLRST…YYHLYGFASA (70 aa)) constitute a mitochondrion transit peptide. Over 71 to 277 (MTPAEEGLHA…AEPEMDDRKR (207 aa)) the chain is Mitochondrial intermembrane. Residues 97 to 250 (QALRRGFQVY…GLVDYEDGTP (154 aa)) enclose the Cytochrome c domain. Residues cysteine 110, cysteine 113, and histidine 114 each contribute to the heme c site. The span at 139–151 (EENEYDTEPNDQG) shows a compositional bias: acidic residues. Residues 139–162 (EENEYDTEPNDQGEIEKRPGKLSD) are disordered. Methionine 234 provides a ligand contact to heme c. A helical membrane pass occupies residues 278–296 (MGMKVLVVTSVLFALSVYV). At 297 to 332 (KRYKWAWLKSRKIVYDPPKSPPPATNLALPQQRAKS) the chain is on the mitochondrial matrix side.

This sequence belongs to the cytochrome c family. In terms of assembly, component of the ubiquinol-cytochrome c oxidoreductase (cytochrome b-c1 complex, complex III, CIII), a multisubunit enzyme composed of 10 subunits. The complex is composed of 3 respiratory subunits cytochrome b (cob), cytochrome c1 (cyt-1) and Rieske protein (fes-1), 2 core protein subunits pep and ucr-1, and 5 low-molecular weight protein subunits qcr6, qcr7, qcr8, qcr9 and probably NCU16844/qcr10. The complex exists as an obligatory dimer and forms supercomplexes (SCs) in the inner mitochondrial membrane with NADH-ubiquinone oxidoreductase (complex I, CI) and cytochrome c oxidase (complex IV, CIV), resulting in different assemblies (supercomplexes SCI(1)III(2), SCIII(2)IV(1) and SCIII(2)IV(2) as well as higher order I(x)III(y)IV(z) megacomplexes). It depends on heme c as a cofactor.

Its subcellular location is the mitochondrion inner membrane. The enzyme catalyses a quinol + 2 Fe(III)-[cytochrome c](out) = a quinone + 2 Fe(II)-[cytochrome c](out) + 2 H(+)(out). Component of the ubiquinol-cytochrome c oxidoreductase, a multisubunit transmembrane complex that is part of the mitochondrial electron transport chain which drives oxidative phosphorylation. The respiratory chain contains 3 multisubunit complexes succinate dehydrogenase (complex II, CII), ubiquinol-cytochrome c oxidoreductase (cytochrome b-c1 complex, complex III, CIII) and cytochrome c oxidase (complex IV, CIV), that cooperate to transfer electrons derived from NADH and succinate to molecular oxygen, creating an electrochemical gradient over the inner membrane that drives transmembrane transport and the ATP synthase. The cytochrome b-c1 complex catalyzes electron transfer from ubiquinol to cytochrome c, linking this redox reaction to translocation of protons across the mitochondrial inner membrane, with protons being carried across the membrane as hydrogens on the quinol. In the process called Q cycle, 2 protons are consumed from the matrix, 4 protons are released into the intermembrane space and 2 electrons are passed to cytochrome c. Cytochrome c1 is a catalytic core subunit containing a c-type heme. It transfers electrons from the [2Fe-2S] iron-sulfur cluster of the Rieske protein to cytochrome c. The sequence is that of Cytochrome c1, heme protein, mitochondrial (cyt-1) from Neurospora crassa (strain ATCC 24698 / 74-OR23-1A / CBS 708.71 / DSM 1257 / FGSC 987).